Reading from the N-terminus, the 155-residue chain is MPKFIEGKLDAKGLRFGIVVGRFNSFISERLLEGALDALIRHGADDKNIDVARVPGAFEIPLATKKMAATGRYDAIICLGAVIRGATPHFDYVAAEVSKGVAHVSLDSGVPVAFGVLTTDTIEQAVERAGTKAGNKGFDSAVTAIETANLFKGIK.

5-amino-6-(D-ribitylamino)uracil-binding positions include phenylalanine 23, 57–59 (AFE), and 81–83 (AVI). A (2S)-2-hydroxy-3-oxobutyl phosphate-binding site is contributed by 86–87 (AT). The active-site Proton donor is the histidine 89. Residue phenylalanine 114 coordinates 5-amino-6-(D-ribitylamino)uracil. Arginine 128 serves as a coordination point for (2S)-2-hydroxy-3-oxobutyl phosphate.

The protein belongs to the DMRL synthase family.

The catalysed reaction is (2S)-2-hydroxy-3-oxobutyl phosphate + 5-amino-6-(D-ribitylamino)uracil = 6,7-dimethyl-8-(1-D-ribityl)lumazine + phosphate + 2 H2O + H(+). The protein operates within cofactor biosynthesis; riboflavin biosynthesis; riboflavin from 2-hydroxy-3-oxobutyl phosphate and 5-amino-6-(D-ribitylamino)uracil: step 1/2. In terms of biological role, catalyzes the formation of 6,7-dimethyl-8-ribityllumazine by condensation of 5-amino-6-(D-ribitylamino)uracil with 3,4-dihydroxy-2-butanone 4-phosphate. This is the penultimate step in the biosynthesis of riboflavin. The polypeptide is 6,7-dimethyl-8-ribityllumazine synthase (Geotalea uraniireducens (strain Rf4) (Geobacter uraniireducens)).